The chain runs to 157 residues: MGKKGKGIKPVVDNRRARYEYHIKENLEAGLVLVGTEVKSLRMGKANLRDAYAVVKDGEIWVNNFHISPYDKGNQFNHDPLRPKKLLLHRREINRLYALQREKGLTLIPLKIYFKEGRAKMDLAVAVGKKLYDKREDIASRDAWRDMERSLKERNRA.

This sequence belongs to the SmpB family.

It localises to the cytoplasm. Its function is as follows. Required for rescue of stalled ribosomes mediated by trans-translation. Binds to transfer-messenger RNA (tmRNA), required for stable association of tmRNA with ribosomes. tmRNA and SmpB together mimic tRNA shape, replacing the anticodon stem-loop with SmpB. tmRNA is encoded by the ssrA gene; the 2 termini fold to resemble tRNA(Ala) and it encodes a 'tag peptide', a short internal open reading frame. During trans-translation Ala-aminoacylated tmRNA acts like a tRNA, entering the A-site of stalled ribosomes, displacing the stalled mRNA. The ribosome then switches to translate the ORF on the tmRNA; the nascent peptide is terminated with the 'tag peptide' encoded by the tmRNA and targeted for degradation. The ribosome is freed to recommence translation, which seems to be the essential function of trans-translation. The protein is SsrA-binding protein of Syntrophomonas wolfei subsp. wolfei (strain DSM 2245B / Goettingen).